A 326-amino-acid polypeptide reads, in one-letter code: Protein LEG1 homolog (326 aa).

Residues 1–22 (MKSNKTIFLILLFLINFNSIYS) form the signal peptide. N-linked (GlcNAc...) asparagine glycans are attached at residues Asn58, Asn85, Asn165, Asn226, and Asn245.

It belongs to the LEG1 family.

The protein resides in the secreted. This Dictyostelium discoideum (Social amoeba) protein is Protein LEG1 homolog.